A 431-amino-acid chain; its full sequence is MHFSKKCSVFKVVLSALLIVALLQLLYLSFLSKLHGKQQRYKYSELFGSKKNANQGEKNPRREHLRYSLSTGGIFDGSGQYRVYKNLIKSDFSTNQKPGADPRSHHLALATHTTINNLHHLESLLERWKNPISVAIFANGEDVKFATAIIYALSLFCPQVQALVDFHLVCHSGEMATFPDQDREHFVGLQEMGCPAVFAKLESHRDKYKNYAIGSNVSYPNNLLRNVARGGTDAAYILVIDIDMIPSANLHHQFVTMLMKREPAADEVLVLPAFEIRHIRKMPASKPELVQLYQVGEVRPFYDELCSRCQAPTNYSLWVNLASKSSGPLEVSYTINWVDPWEPFYIGARSVPLYDESFRQYGFNRISQACELHIAGYRFSVVSNAFLLHKGFKVQGEFHSRKDEENRKNRILFRSFKESLKAKYPTSPRRC.

Over 1 to 11 (MHFSKKCSVFK) the chain is Cytoplasmic. Residues 12-32 (VVLSALLIVALLQLLYLSFLS) form a helical membrane-spanning segment. Residues 33–431 (KLHGKQQRYK…AKYPTSPRRC (399 aa)) are Lumenal-facing. N-linked (GlcNAc...) asparagine glycosylation is present at Asn216. Positions 241 and 243 each coordinate Mn(2+). The N-linked (GlcNAc...) asparagine glycan is linked to Asn314.

It belongs to the glycosyltransferase 49 family. Mn(2+) serves as cofactor.

It is found in the golgi apparatus membrane. It carries out the reaction 3-O-[beta-D-Xyl-(1-&gt;4)-Rib-ol-P-Rib-ol-P-3-beta-D-GalNAc-(1-&gt;3)-beta-D-GlcNAc-(1-&gt;4)-(O-6-P-alpha-D-Man)]-Thr-[protein] + UDP-alpha-D-glucuronate = 3-O-[beta-D-GlcA-(1-&gt;3)-beta-D-Xyl-(1-&gt;4)-Rib-ol-P-Rib-ol-P-3-beta-D-GalNAc-(1-&gt;3)-beta-D-GlcNAc-(1-&gt;4)-(O-6-P-alpha-D-Man)]-Thr-[protein] + UDP + H(+). Its pathway is protein modification; protein glycosylation. Beta-1,4-glucuronyltransferase involved in O-mannosylation of alpha-dystroglycan (DAG1). Transfers a glucuronic acid (GlcA) residue onto a xylose (Xyl) acceptor to produce the glucuronyl-beta-1,4-xylose-beta disaccharide primer, which is further elongated by LARGE, during synthesis of phosphorylated O-mannosyl glycan. Phosphorylated O-mannosyl glycan is a carbohydrate structure present in alpha-dystroglycan (DAG1), which is required for binding laminin G-like domain-containing extracellular proteins with high affinity. Required for axon guidance; via its function in O-mannosylation of alpha-dystroglycan (DAG1). The sequence is that of Beta-1,4-glucuronyltransferase 1 from Danio rerio (Zebrafish).